The sequence spans 360 residues: Glutamate 5-kinase (360 aa).

Lysine 7 lines the ATP pocket. The substrate site is built by serine 47, aspartate 134, and asparagine 146. Residues 166-167 and 210-216 contribute to the ATP site; these read TD and TGGISTK. The 82-residue stretch at 275 to 356 folds into the PUA domain; that stretch reads VGKITLDDGA…SSIIVVHRDV (82 aa).

Belongs to the glutamate 5-kinase family.

It localises to the cytoplasm. It catalyses the reaction L-glutamate + ATP = L-glutamyl 5-phosphate + ADP. It participates in amino-acid biosynthesis; L-proline biosynthesis; L-glutamate 5-semialdehyde from L-glutamate: step 1/2. Its function is as follows. Catalyzes the transfer of a phosphate group to glutamate to form L-glutamate 5-phosphate. This is Glutamate 5-kinase from Prochlorococcus marinus (strain AS9601).